The primary structure comprises 120 residues: MQRNMLRAKLHRATVTQADLDYEGSCGIDEDLLDAADMREYEKIELYNVNNGERFSTYIIKGKRGSGEISLNGAAARRAHVGDKLIICTYAPMNEEEVANYKPKIVLLGDGNRIKEIKAV.

S25 functions as the Schiff-base intermediate with substrate; via pyruvic acid in the catalytic mechanism. S25 carries the pyruvic acid (Ser) modification. T57 provides a ligand contact to substrate. The active-site Proton donor is the Y58. 73 to 75 (GAA) serves as a coordination point for substrate.

This sequence belongs to the PanD family. In terms of assembly, heterooctamer of four alpha and four beta subunits. It depends on pyruvate as a cofactor. Is synthesized initially as an inactive proenzyme, which is activated by self-cleavage at a specific serine bond to produce a beta-subunit with a hydroxyl group at its C-terminus and an alpha-subunit with a pyruvoyl group at its N-terminus.

The protein localises to the cytoplasm. The enzyme catalyses L-aspartate + H(+) = beta-alanine + CO2. It functions in the pathway cofactor biosynthesis; (R)-pantothenate biosynthesis; beta-alanine from L-aspartate: step 1/1. In terms of biological role, catalyzes the pyruvoyl-dependent decarboxylation of aspartate to produce beta-alanine. The sequence is that of Aspartate 1-decarboxylase from Ralstonia nicotianae (strain ATCC BAA-1114 / GMI1000) (Ralstonia solanacearum).